Here is a 514-residue protein sequence, read N- to C-terminus: MRYPSTANSAVSMRSTEELLLSNGTAGKMNGALEHSDQPDPDAIKMFVGQIPRSWSEKELKELFEPYGAVYQINILRDRSQNPPQSKGCCFVTFYTRKAALEAQNALHNIKTLTGMHHPIQMKPADSEKSNAVEDRKLFIGMVSKKCNENDIRVMFSPYGQIEECRILRGPDGLSRGCAFVTFSTRAMAQNAIKAMHQSQTMEGCSSPMVVKFADTQKDKEQRRLQQQLAQQMQQLNSASAWGSLTGLTGLTPQYLALLQQATSSSNLGAFSGIQQMAGMNALQLQNLATLAAAAAAAQSSASPSTASALTSSTGSLGALASPAGSTANSSAAMGSLGSLGTLQGLAGATVGLNNINALAGSVNSMAALNGGLGSTGLSNGSAGPMDALTQAYSGIQQYAAAALPTLYSQSLLQQQSAAGSQKEGPEGANLFIYHLPQEFGDQDILQMFMPFGNVVSAKVFIDKQTNLSKCFGFVSYDNPVSAQAAIQAMNGFQIGMKRLKVQLKRSKNDSKPY.

RRM domains follow at residues 44–127, 136–216, and 429–507; these read IKMF…PADS, RKLF…FADT, and ANLF…LKRS.

The protein belongs to the CELF/BRUNOL family.

It is found in the nucleus. The protein resides in the cytoplasm. Functionally, RNA-binding protein implicated in the regulation of several post-transcriptional events. May be involved in pre-mRNA alternative splicing, mRNA translation repression and stability. This Danio rerio (Zebrafish) protein is CUGBP Elav-like family member 2 (celf2).